We begin with the raw amino-acid sequence, 106 residues long: Iron-sulfur cluster assembly protein CyaY (106 aa).

It belongs to the frataxin family.

In terms of biological role, involved in iron-sulfur (Fe-S) cluster assembly. May act as a regulator of Fe-S biogenesis. This is Iron-sulfur cluster assembly protein CyaY from Yersinia enterocolitica serotype O:8 / biotype 1B (strain NCTC 13174 / 8081).